A 442-amino-acid chain; its full sequence is UDP-N-acetylmuramate--L-alanine ligase (442 aa).

An ATP-binding site is contributed by 109-115; the sequence is GAHGKTS.

Belongs to the MurCDEF family.

The protein resides in the cytoplasm. It carries out the reaction UDP-N-acetyl-alpha-D-muramate + L-alanine + ATP = UDP-N-acetyl-alpha-D-muramoyl-L-alanine + ADP + phosphate + H(+). It functions in the pathway cell wall biogenesis; peptidoglycan biosynthesis. Functionally, cell wall formation. The protein is UDP-N-acetylmuramate--L-alanine ligase of Streptococcus pyogenes serotype M18 (strain MGAS8232).